A 469-amino-acid polypeptide reads, in one-letter code: MQLQRLGAPLLKRLVGGCIRQSTAPIMPCVVVSGSGVFLTPVRTYMPLPNDQSDFSPYIEIDLPSESRIQSLHKSGLAAQEWVACEKVHGTNFGIYLINQGDHEVVRFAKRSGIMDPNENFFGYHILIDEFTAQIRILNDLLKQKYGLSRVGRLVLNGELFGAKYKHPLVPKSEKWCTLPNGKKFPIAGVQIQREPFPQYSPELHFFAFDIKYSVSGAEEDFVLLGYDEFVEFSSKVPNLLYARALVRGTLDECLAFDVENFMTPLPALLGLGNYPLEGNLAEGVVIRHVRRGDPAVEKHNVSTIIKLRCSSFMELKHPGKQKELKETFIDTVRSGALRRVRGNVTVISDSMLPQVEAAANDLLLNNVSDGRLSNVLSKIGREPLLSGEVSQVDVVLMLAKDALKDFLKEVDSLVLNTTLAFRKLLITNVYFESKRLVEQKWKELMQEEAAAQSEAIPPLSPAAPTKGE.

A mitochondrion-targeting transit peptide spans 1–44 (MQLQRLGAPLLKRLVGGCIRQSTAPIMPCVVVSGSGVFLTPVRT). ATP-binding positions include 59–61 (IEI), 86–92 (EKVHGTN), arginine 111, glutamate 159, phenylalanine 209, and 307–309 (KLR). Lysine 87 (N6-AMP-lysine intermediate) is an active-site residue. The tract at residues 450-469 (AAAQSEAIPPLSPAAPTKGE) is disordered.

It belongs to the RNA ligase 2 family. Component of the RNA editing complex (editosome), a 1600 kDa complex composed of at least 20 proteins. Interacts with terminal uridylyltransferase MEAT1.

Its subcellular location is the mitochondrion. The enzyme catalyses ATP + (ribonucleotide)n-3'-hydroxyl + 5'-phospho-(ribonucleotide)m = (ribonucleotide)n+m + AMP + diphosphate.. Its function is as follows. Essential for RNA editing. RNA editing in kinetoplastid mitochondria inserts and deletes uridylates at multiple sites in pre-mRNAs as directed by guide RNAs. This Trypanosoma brucei brucei protein is RNA-editing ligase 1, mitochondrial (REL1).